The sequence spans 483 residues: Glutamyl-tRNA(Gln) amidotransferase subunit A (483 aa).

Residues lysine 76 and serine 151 each act as charge relay system in the active site. The active-site Acyl-ester intermediate is the serine 175.

The protein belongs to the amidase family. GatA subfamily. Heterotrimer of A, B and C subunits.

It carries out the reaction L-glutamyl-tRNA(Gln) + L-glutamine + ATP + H2O = L-glutaminyl-tRNA(Gln) + L-glutamate + ADP + phosphate + H(+). Its function is as follows. Allows the formation of correctly charged Gln-tRNA(Gln) through the transamidation of misacylated Glu-tRNA(Gln) in organisms which lack glutaminyl-tRNA synthetase. The reaction takes place in the presence of glutamine and ATP through an activated gamma-phospho-Glu-tRNA(Gln). This chain is Glutamyl-tRNA(Gln) amidotransferase subunit A, found in Chromobacterium violaceum (strain ATCC 12472 / DSM 30191 / JCM 1249 / CCUG 213 / NBRC 12614 / NCIMB 9131 / NCTC 9757 / MK).